A 684-amino-acid chain; its full sequence is 77 kDa membrane protein (684 aa).

A signal peptide spans 1–30 (MKFKSLITTTLALGVLASTGANFNNNEASA). 6 MAP repeats span residues 45–154 (GYSK…EDKK), 156–265 (DKAN…ENKA), 266–374 (KRNY…KADR), 375–474 (YVPY…TGTK), 475–584 (AKAD…KKNN), and 586–684 (SNNV…ELKF).

It localises to the cell membrane. Binds various plasma and ECM-proteins. The polypeptide is 77 kDa membrane protein (Staphylococcus aureus (strain COL)).